Here is a 231-residue protein sequence, read N- to C-terminus: uncharacterized protein (231 aa).

Residue 10–34 (VVTGAGSGIGEAIATLLHEEGAKVV) coordinates NADP(+). Ser140 lines the substrate pocket. Tyr153 acts as the Proton acceptor in catalysis.

Belongs to the short-chain dehydrogenases/reductases (SDR) family.

This is an uncharacterized protein from Staphylococcus aureus (strain MRSA252).